We begin with the raw amino-acid sequence, 551 residues long: NAD(P)H-quinone oxidoreductase chain 4 (551 aa).

The next 14 membrane-spanning stretches (helical) occupy residues 25-45, 56-76, 111-131, 133-153, 157-177, 189-209, 233-253, 264-284, 298-318, 335-355, 356-376, 397-417, 438-458, and 485-505; these read FPWLSLSILFPIVGSLMVPFI, WFALGIALTTFLITVAAYLNG, LILLTSFITTLAVLAAWPVTF, PKLFFFLMLAMDGGQIAVFAV, LLFFLAWELELLPVYLLLAIW, FILYTAGSSLFILLAALAMGF, LLCYAGLLIAFGVKLPIVPLH, TAPVHMLLAGILLKMGGYALM, FAPLLVVLGVVNIIYAALTSF, MGFVLIGIGSFSALGTSGAML, QMISHGLIGASLFFLVGATYD, FALWTVCSLASLALPGMSGFV, IVIDGLAAVGVILTPIYLLSM, and VYIIGCLLVPIIGIGLYPRLM.

Belongs to the complex I subunit 4 family.

Its subcellular location is the cellular thylakoid membrane. The enzyme catalyses a plastoquinone + NADH + (n+1) H(+)(in) = a plastoquinol + NAD(+) + n H(+)(out). It catalyses the reaction a plastoquinone + NADPH + (n+1) H(+)(in) = a plastoquinol + NADP(+) + n H(+)(out). Functionally, NDH-1 shuttles electrons from NAD(P)H, via FMN and iron-sulfur (Fe-S) centers, to quinones in the respiratory chain. The immediate electron acceptor for the enzyme in this species is believed to be plastoquinone. Couples the redox reaction to proton translocation (for every two electrons transferred, four hydrogen ions are translocated across the cytoplasmic membrane), and thus conserves the redox energy in a proton gradient. The sequence is that of NAD(P)H-quinone oxidoreductase chain 4 from Synechococcus sp. (strain WH7803).